The chain runs to 127 residues: Large ribosomal subunit protein bL17 (127 aa).

This sequence belongs to the bacterial ribosomal protein bL17 family. In terms of assembly, part of the 50S ribosomal subunit. Contacts protein L32.

The chain is Large ribosomal subunit protein bL17 from Levilactobacillus brevis (strain ATCC 367 / BCRC 12310 / CIP 105137 / JCM 1170 / LMG 11437 / NCIMB 947 / NCTC 947) (Lactobacillus brevis).